Consider the following 36-residue polypeptide: U-metritoxin-Msn1a (36 aa).

Residues 4–36 (CKDKLPACGEYRGSFCKLEKVKSNCEKTCGVKC) enclose the ShKT domain. 3 disulfides stabilise this stretch: Cys-4-Cys-36, Cys-11-Cys-28, and Cys-19-Cys-32.

The protein belongs to the sea anemone type 1 potassium channel toxin family. Type 1b subfamily.

The protein resides in the secreted. Its subcellular location is the nematocyst. Functionally, has hemolytic activity. Inhibits voltage-gated potassium channels (Kv1/KCNA). The protein is U-metritoxin-Msn1a of Metridium senile (Brown sea anemone).